A 289-amino-acid polypeptide reads, in one-letter code: Ribosomal protein L11 methyltransferase (289 aa).

S-adenosyl-L-methionine is bound by residues threonine 142, glycine 163, aspartate 185, and asparagine 226.

The protein belongs to the methyltransferase superfamily. PrmA family.

The protein localises to the cytoplasm. It catalyses the reaction L-lysyl-[protein] + 3 S-adenosyl-L-methionine = N(6),N(6),N(6)-trimethyl-L-lysyl-[protein] + 3 S-adenosyl-L-homocysteine + 3 H(+). Its function is as follows. Methylates ribosomal protein L11. The protein is Ribosomal protein L11 methyltransferase of Legionella pneumophila (strain Paris).